The chain runs to 323 residues: Sphingomyelinase D (323 aa).

Residues 1-20 (MISLLRLCSFLAAGSILVQG) form the signal peptide. His59 is a catalytic residue. Positions 79, 81, and 127 each coordinate Mg(2+). The short motif at 308–315 (ATNDDNPW) is the SMD-tail element.

It belongs to the sphingomyelinase D/phospholipase D family. Requires Mg(2+) as cofactor.

The protein localises to the secreted. The enzyme catalyses a sphingomyelin + H2O = an N-acylsphing-4-enine 1-phosphate + choline + H(+). Its function is as follows. Catalyzes the hydrolysis of sphingomyelin. Sphingomyelinases D are produced by some spider in their venoms, but also by arthropods such as ticks, or pathogenic bacteria and fungi. They might play a role in pathogenicity through different mechanisms, such as membrane destabilization and host cell penetration, but also pulmonary inflammation and cutaneous lesions. In Trichophyton rubrum (strain ATCC MYA-4607 / CBS 118892) (Athlete's foot fungus), this protein is Sphingomyelinase D.